We begin with the raw amino-acid sequence, 239 residues long: Serine protease SplF (239 aa).

The signal sequence occupies residues 1 to 36 (MNKNIIIKSIAALTILTSVTGVGTTMVEGIQQTAKA). Residues H75, D114, and S192 each act as charge relay system in the active site.

This sequence belongs to the peptidase S1B family.

Its subcellular location is the secreted. In Staphylococcus aureus (strain Mu50 / ATCC 700699), this protein is Serine protease SplF (splF).